Here is a 585-residue protein sequence, read N- to C-terminus: MAEAATGFLEQLKSCIVWSWTYLWTVWFFIVLFLVYILRVPLKINDNLSTVSMFLNTLTPKFYVALTGTSSLISGLILIFEWWYFRKYGTSFIEQVSVSHLRPLLGGVDNNSSNNSNSSNGDSDSNRQSVSECKVWRNPLNLFRGAEYNRYTWVTGREPLTYYDMNLSAQDHQTFFTCDSDHLRPADAIMQKAWRERNPQARISAAHEALEINEIRSRVEVPLIASSTIWEIKLLPKCATAYILLAEEEATTIAEAEKLFKQALKAGDGCYRRSQQLQHHGSQYEAQHRRDTNVLVYIKRRLAMCARRLGRTREAVKMMRDLMKEFPLLSMFNIHENLLEALLELQAYADVQAVLAKYDDISLPKSATICYTAALLKARAVSDKFSPEAASRRGLSTAEMNAVEAIHRAVEFNPHVPKYLLEMKSLILPPEHILKRGDSEAIAYAFFHLAHWKRVEGALNLLHCTWEGTFRMIPYPLEKGHLFYPYPICTETADRELLPSFHEVSVYPKKELPFFILFTAGLCSFTAMLALLTHQFPELMGVFAKAMIDIFCSAEFRDWNCKSIFMRVEDELEIPPAPQSQHFQN.

Residues 15-35 (CIVWSWTYLWTVWFFIVLFLV) form a helical membrane-spanning segment. N-linked (GlcNAc...) asparagine glycosylation occurs at asparagine 47. Residues 62–82 (FYVALTGTSSLISGLILIFEW) form a helical membrane-spanning segment. Residue serine 386 is modified to Phosphoserine. A helical membrane pass occupies residues 512–532 (LPFFILFTAGLCSFTAMLALL).

The protein belongs to the ST7 family.

It localises to the membrane. The protein is Suppressor of tumorigenicity 7 protein (ST7) of Gorilla gorilla gorilla (Western lowland gorilla).